We begin with the raw amino-acid sequence, 354 residues long: Nicotinate-nucleotide--dimethylbenzimidazole phosphoribosyltransferase (354 aa).

The active-site Proton acceptor is Glu-313.

It belongs to the CobT family.

The enzyme catalyses 5,6-dimethylbenzimidazole + nicotinate beta-D-ribonucleotide = alpha-ribazole 5'-phosphate + nicotinate + H(+). The protein operates within nucleoside biosynthesis; alpha-ribazole biosynthesis; alpha-ribazole from 5,6-dimethylbenzimidazole: step 1/2. Its function is as follows. Catalyzes the synthesis of alpha-ribazole-5'-phosphate from nicotinate mononucleotide (NAMN) and 5,6-dimethylbenzimidazole (DMB). This is Nicotinate-nucleotide--dimethylbenzimidazole phosphoribosyltransferase from Ralstonia nicotianae (strain ATCC BAA-1114 / GMI1000) (Ralstonia solanacearum).